The following is a 157-amino-acid chain: MFDVLMYLFETYIHSDADVMVEQNELTDELSRAGFDKDEIEKALNWLERLANLHDSEREVYVAASAQGSMRIYAPQELARLGTECRGFLLFLEQAQVLNAETREICIERLLELDKPDIELDDLKWVVMMVLFNVPGSENAYQQMEELVFDESDGVIH.

It belongs to the Smg family.

This is Protein Smg homolog from Aeromonas salmonicida (strain A449).